The sequence spans 549 residues: Indole-3-acetic acid-amido synthetase GH3.2 (549 aa).

Belongs to the IAA-amido conjugating enzyme family. Expressed in flowers, pollen, cotyledons, stipules, true leaves, hypocotyls, and all parts of the roots except for the primary root tips.

Catalyzes the synthesis of indole-3-acetic acid (IAA)-amino acid conjugates, providing a mechanism for the plant to cope with the presence of excess auxin. Strongly reactive with Glu, Gln, Trp, Asp, Ala, Leu, Phe, Gly, Tyr, Met, Ile and Val. Little or no product formation with His, Ser, Thr, Arg, Lys, or Cys. Also active on pyruvic and butyric acid analogs of IAA, PAA and the synthetic auxin naphthaleneacetic acid (NAA). The two chlorinated synthetic auxin herbicides 2,4-D and 3,6-dichloro-o-anisic acid (dicamba) cannot be used as substrates. This Arabidopsis thaliana (Mouse-ear cress) protein is Indole-3-acetic acid-amido synthetase GH3.2 (GH3.2).